The sequence spans 681 residues: DNA ligase (681 aa).

NAD(+) is bound by residues 45–49, 94–95, and Glu120; these read DFDFD and SL. The active-site N6-AMP-lysine intermediate is Lys122. Arg143, Glu177, Lys289, and Lys313 together coordinate NAD(+). Zn(2+) contacts are provided by Cys403, Cys406, Cys421, and Cys426. Residues 593-681 enclose the BRCT domain; it reads ADQQPFAGQS…SLKIDFKNLI (89 aa).

This sequence belongs to the NAD-dependent DNA ligase family. LigA subfamily. Mg(2+) is required as a cofactor. The cofactor is Mn(2+).

It carries out the reaction NAD(+) + (deoxyribonucleotide)n-3'-hydroxyl + 5'-phospho-(deoxyribonucleotide)m = (deoxyribonucleotide)n+m + AMP + beta-nicotinamide D-nucleotide.. Its function is as follows. DNA ligase that catalyzes the formation of phosphodiester linkages between 5'-phosphoryl and 3'-hydroxyl groups in double-stranded DNA using NAD as a coenzyme and as the energy source for the reaction. It is essential for DNA replication and repair of damaged DNA. This Leptospira interrogans serogroup Icterohaemorrhagiae serovar Lai (strain 56601) protein is DNA ligase.